A 130-amino-acid polypeptide reads, in one-letter code: Large ribosomal subunit protein bL19 (130 aa).

Belongs to the bacterial ribosomal protein bL19 family.

Its function is as follows. This protein is located at the 30S-50S ribosomal subunit interface and may play a role in the structure and function of the aminoacyl-tRNA binding site. The polypeptide is Large ribosomal subunit protein bL19 (Mycoplasma mycoides subsp. mycoides SC (strain CCUG 32753 / NCTC 10114 / PG1)).